We begin with the raw amino-acid sequence, 173 residues long: Small ribosomal subunit protein uS10m (173 aa).

The protein belongs to the universal ribosomal protein uS10 family. In terms of assembly, component of the mitochondrial ribosome small subunit (28S) which comprises a 12S rRNA and about 30 distinct proteins.

It is found in the mitochondrion. This is Small ribosomal subunit protein uS10m (mRpS10) from Drosophila melanogaster (Fruit fly).